The primary structure comprises 907 residues: MKSSEIRNAFIKYFEKNGHKVVPSSSLIPENDPTLLFANAGMNQFKNTFLGLEKRDYSRAVTAQKCVRAGGKHNDLENVGFTARHHTFFEMVGNFSFGDYFKKDAIHFAWEFLTKELAIPKEKLYVTVHISDDEAADIWHNQEGVPRERIFRFDKDNFWKMGDTGPCGPCTEIFYDHGPKAGTISDPFKGIEAGEDRFVEIWNLVFMQYFENPPGTLTPLPKPSVDTGGGLERMSAAMQGVFNNYDTDLFQPMIQLACKIGNIEYISDKEVLAKNPAAAEVTSALRVLADHCRSTSFLIADGALPSNEGRGYVLRRIMRRAIRYGRKLSADKSFLPGMAEALIESMGSVYPELKTRRDHILNTIRDEEDRFIATLDKGTAILEDELKKAKSKGIKELSGEVVFRMYDTYGFPADLTRVIANEQGIEVNEAAFEKEMEDNRAKSKASWKGKSMGADEAHMIKFAKDYLQSGKSVTFLGYEGTIGDGKVMGLSNGQAEVQELKTGDTGLMILNATTFYGEGGGQSGDVGYIMHDTNRARVINTTKIDDIVLHHVEIEHGSFKVGTAVVTGVDPVERRNTAANHSATHLLHAALRKVLGTHVTQAGSLVDSQKTRFDFTHNKPVSSEEIKKIEDLVNEQIARCNPVQTEMMSHKAALEKGAMALFGEKYASDVRVLTMGDFSCELCGGTHVKNTSEIRLFKIVSEAGVSSGVRRIEAITADNALQYMMSAVTHLDDALAAAGFQKSPHYIKHLETTGETATLANRVESLKDQVKQLEKEMKKLQGGQVNVDDLAANALTFKTKAGASAKLVLADVPLDDRQVLAEVTDHLKNKIQSGIVVVVGQGDGSHPIIVSVSKEISGETKAGDLLKEVAGVMGGKGGGRPDFAQGAAPNRAQLNEAFSKVKSMLGL.

The Zn(2+) site is built by histidine 581, histidine 585, cysteine 683, and histidine 687.

Belongs to the class-II aminoacyl-tRNA synthetase family. Zn(2+) is required as a cofactor.

Its subcellular location is the cytoplasm. It carries out the reaction tRNA(Ala) + L-alanine + ATP = L-alanyl-tRNA(Ala) + AMP + diphosphate. Catalyzes the attachment of alanine to tRNA(Ala) in a two-step reaction: alanine is first activated by ATP to form Ala-AMP and then transferred to the acceptor end of tRNA(Ala). Also edits incorrectly charged Ser-tRNA(Ala) and Gly-tRNA(Ala) via its editing domain. The chain is Alanine--tRNA ligase from Bdellovibrio bacteriovorus (strain ATCC 15356 / DSM 50701 / NCIMB 9529 / HD100).